Reading from the N-terminus, the 62-residue chain is Photosystem II reaction center protein Z (62 aa).

A run of 2 helical transmembrane segments spans residues 8–28 and 41–61; these read ALIS…VAYA and WLGS…NFFV.

It belongs to the PsbZ family. PSII is composed of 1 copy each of membrane proteins PsbA, PsbB, PsbC, PsbD, PsbE, PsbF, PsbH, PsbI, PsbJ, PsbK, PsbL, PsbM, PsbT, PsbX, PsbY, PsbZ, Psb30/Ycf12, peripheral proteins PsbO, CyanoQ (PsbQ), PsbU, PsbV and a large number of cofactors. It forms dimeric complexes.

It localises to the cellular thylakoid membrane. In terms of biological role, may control the interaction of photosystem II (PSII) cores with the light-harvesting antenna, regulates electron flow through the 2 photosystem reaction centers. PSII is a light-driven water plastoquinone oxidoreductase, using light energy to abstract electrons from H(2)O, generating a proton gradient subsequently used for ATP formation. The sequence is that of Photosystem II reaction center protein Z from Trichormus variabilis (strain ATCC 29413 / PCC 7937) (Anabaena variabilis).